The following is a 140-amino-acid chain: Protein archease (140 aa).

3 residues coordinate Ca(2+): D11, D139, and L140.

The protein belongs to the archease family.

Functionally, activates the tRNA-splicing ligase complex by facilitating the enzymatic turnover of catalytic subunit RtcB. Acts by promoting the guanylylation of RtcB, a key intermediate step in tRNA ligation. Can also alter the NTP specificity of RtcB such that ATP, dGTP or ITP is used efficiently. The sequence is that of Protein archease from Methanopyrus kandleri (strain AV19 / DSM 6324 / JCM 9639 / NBRC 100938).